The sequence spans 875 residues: Cytosolic phospholipase A2 epsilon (875 aa).

A disordered region spans residues 16–70; that stretch reads THASEGHHGLGTSMLVPKNPQGEEDSKLGRNCSGFEDAQDPQTAVPSSPLLSMAS. Residues 60-183 form the C2 domain; sequence VPSSPLLSMA…CLRNKTHVKF (124 aa). Positions 61–70 are enriched in low complexity; it reads PSSPLLSMAS. Ca(2+) contacts are provided by Asp-97, Asp-103, Asp-153, Asp-155, and Asp-161. The PLA2c domain occupies 332–875; it reads PCSDTLDVRL…KKRMRSQCPS (544 aa). The active-site Nucleophile is Ser-420. Residue Asp-708 is the Proton acceptor of the active site. Residue Ser-808 is modified to Phosphoserine. Residues 865-875 form a required for localization at membrane structures region; that stretch reads EKKRMRSQCPS.

The cofactor is Ca(2+). Predominantly expressed in brain, heart, skeletal muscle, testis and thyroid. Expressed in neurons but not astrocytes or microglia. Expressed at lower level in stomach.

It localises to the cytoplasm. The protein resides in the cytosol. Its subcellular location is the early endosome membrane. The protein localises to the lysosome membrane. It is found in the cell membrane. The enzyme catalyses a 1,2-diacyl-sn-glycero-3-phosphoethanolamine + a 1,2-diacyl-sn-glycero-3-phosphocholine = an N-acyl-1,2-diacyl-sn-glycero-3-phosphoethanolamine + a 2-acyl-sn-glycero-3-phosphocholine + H(+). It catalyses the reaction 1-hexadecanoyl-2-octadecanoyl-sn-glycero-3-phosphocholine + 1,2-di-(9Z-octadecenoyl)-sn-glycero-3-phosphoethanolamine = 2-octadecanoyl-sn-glycero-3-phosphocholine + N-hexadecanoyl-1,2-di-(9Z-octadecenoyl)-sn-glycero-3-phosphoethanolamine + H(+). It carries out the reaction 1-octadecanoyl-2-hexadecanoyl-sn-glycero-3-phosphocholine + 1,2-di-(9Z-octadecenoyl)-sn-glycero-3-phosphoethanolamine = N-octadecanoyl-1,2-di-(9Z-octadecenoyl)-sn-glycero-3-phosphoethanolamine + 2-hexadecanoyl-sn-glycero-3-phosphocholine + H(+). The catalysed reaction is 1,2-di-(9Z-octadecenoyl)-sn-glycero-3-phosphoethanolamine + 1,2-dihexadecanoyl-sn-glycero-3-phosphocholine = N-hexadecanoyl-1,2-di-(9Z-octadecenoyl)-sn-glycero-3-phosphoethanolamine + 2-hexadecanoyl-sn-glycero-3-phosphocholine + H(+). The enzyme catalyses 1,2-di-(5Z,8Z,11Z,14Z-eicosatetraenoyl)-sn-glycero-3-phosphocholine + 1,2-di-(9Z-octadecenoyl)-sn-glycero-3-phosphoethanolamine = N-(5Z,8Z,11Z,14Z-eicosatetraenoyl)-1,2-di-(9Z-octadecenoyl)-sn-glycero-3-phosphoethanolamine + 2-(5Z,8Z,11Z,14Z)-eicosatetraenoyl-sn-glycero-3-phosphocholine + H(+). It catalyses the reaction 2 1,2-di-(9Z-octadecenoyl)-sn-glycero-3-phosphoethanolamine = N,1,2-tri-(9Z-octadecenoyl)-sn-glycero-3-phosphoethanolamine + 2-(9Z-octadecenoyl)-sn-glycero-3-phosphoethanolamine + H(+). It carries out the reaction a 1,2-diacyl-sn-glycero-3-phosphocholine + H2O = a 1-acyl-sn-glycero-3-phosphocholine + a fatty acid + H(+). The catalysed reaction is 1-(1Z-octadecenyl)-2-(9Z-octadecenoyl)-sn-glycero-3-phosphoethanolamine + 1,2-dihexadecanoyl-sn-glycero-3-phosphocholine = 1-O-(1Z-octadecenoyl)-2-(9Z-octadecenoyl)-sn-glycero-3-phospho-N-hexadecanoyl-ethanolamine + 2-hexadecanoyl-sn-glycero-3-phosphocholine + H(+). The enzyme catalyses 1-hexadecanoyl-2-(5Z,8Z,11Z,14Z-eicosatetraenoyl)-sn-glycero-3-phosphocholine + H2O = 1-hexadecanoyl-sn-glycero-3-phosphocholine + (5Z,8Z,11Z,14Z)-eicosatetraenoate + H(+). It catalyses the reaction 1-hexadecanoyl-sn-glycero-3-phosphocholine + H2O = sn-glycerol 3-phosphocholine + hexadecanoate + H(+). Its activity is regulated as follows. Stimulated by cytosolic Ca(2+). Stimulated by anionic phospholipids such as phosphatidylserine. Its function is as follows. Calcium-dependent N-acyltransferase involved in the biosynthesis of N-acyl ethanolamines (NAEs) in the brain. Transfers the sn-1 fatty acyl chain of phosphatidylcholine (fatty acyl donor) to the amine group of phosphatidylethanolamine (fatty acyl acceptor) to generate N-acyl phosphatidylethanolamine (NAPE). Similarly can use plasmenylethanolamine as a fatty acyl acceptor to form N-acyl plasmenylethanolamine (N-Acyl-PlsEt). Both NAPE and N-Acyl-PlsEt can serve as precursors of bioactive NAEs like N-arachidonoyl phosphatidylethanolamine also called anandamide. Has weak phospholipase A2 and lysophospholipase activities. Regulates intracellular membrane trafficking that requires modulation of membrane curvature as it occurs by enrichment in lysophospholipids. Promotes tubule formation involved in clathrin-independent endocytotic trafficking and cargo recycling. This chain is Cytosolic phospholipase A2 epsilon (Pla2g4e), found in Mus musculus (Mouse).